We begin with the raw amino-acid sequence, 147 residues long: Lysozyme C (147 aa).

A signal peptide spans 1-17; that stretch reads MRSLLILVLCFLPLAAP. The C-type lysozyme domain occupies 19-147; it reads KVYGRCELAA…VNVWIRGCRL (129 aa). 4 disulfide bridges follow: cysteine 24-cysteine 145, cysteine 48-cysteine 133, cysteine 82-cysteine 98, and cysteine 94-cysteine 112. Residues glutamate 53 and aspartate 70 contribute to the active site.

This sequence belongs to the glycosyl hydrolase 22 family. As to quaternary structure, monomer. Post-translationally, by an evolutionary shift in the site of proteolytic cleavage of prelysozyme, Gly-18 became the N-terminal residue of the mature protein instead of being the C-terminal residue of the signal sequence as in other birds.

It is found in the secreted. The catalysed reaction is Hydrolysis of (1-&gt;4)-beta-linkages between N-acetylmuramic acid and N-acetyl-D-glucosamine residues in a peptidoglycan and between N-acetyl-D-glucosamine residues in chitodextrins.. Functionally, lysozymes have primarily a bacteriolytic function; those in tissues and body fluids are associated with the monocyte-macrophage system and enhance the activity of immunoagents. This chain is Lysozyme C (LYZ), found in Phasianus colchicus colchicus (Black-necked pheasant).